Here is a 99-residue protein sequence, read N- to C-terminus: Large ribosomal subunit protein bL27 (99 aa).

Positions 1 to 12 (MMINNLEALKLF) are excised as a propeptide. The tract at residues 15-36 (HKGGGSTANGRNSAGRRLGAKR) is disordered.

This sequence belongs to the bacterial ribosomal protein bL27 family. The N-terminus is cleaved by ribosomal processing cysteine protease Prp.

The protein is Large ribosomal subunit protein bL27 of Lactobacillus johnsonii (strain CNCM I-12250 / La1 / NCC 533).